A 295-amino-acid polypeptide reads, in one-letter code: GTPase Era (295 aa).

The region spanning 7 to 176 (KTVSVCIIGR…ITSKAKIAPW (170 aa)) is the Era-type G domain. The G1 stretch occupies residues 15–22 (GRPNSGKS). 15-22 (GRPNSGKS) is a GTP binding site. The interval 41–45 (QTTRS) is G2. The G3 stretch occupies residues 62 to 65 (DTPG). GTP is bound by residues 62–66 (DTPGI) and 124–127 (NKIE). Residues 124 to 127 (NKIE) are G4. Positions 152–154 (ISA) are G5. Positions 204–281 (LQQELPYKLT…HLFLFVKVRE (78 aa)) constitute a KH type-2 domain.

The protein belongs to the TRAFAC class TrmE-Era-EngA-EngB-Septin-like GTPase superfamily. Era GTPase family. In terms of assembly, monomer.

The protein resides in the cytoplasm. The protein localises to the cell inner membrane. Functionally, an essential GTPase that binds both GDP and GTP, with rapid nucleotide exchange. Plays a role in 16S rRNA processing and 30S ribosomal subunit biogenesis and possibly also in cell cycle regulation and energy metabolism. The protein is GTPase Era of Rickettsia canadensis (strain McKiel).